Reading from the N-terminus, the 362-residue chain is Peptide chain release factor 1 (362 aa).

N5-methylglutamine is present on Gln238.

This sequence belongs to the prokaryotic/mitochondrial release factor family. Methylated by PrmC. Methylation increases the termination efficiency of RF1.

Its subcellular location is the cytoplasm. In terms of biological role, peptide chain release factor 1 directs the termination of translation in response to the peptide chain termination codons UAG and UAA. This chain is Peptide chain release factor 1, found in Psychrobacter cryohalolentis (strain ATCC BAA-1226 / DSM 17306 / VKM B-2378 / K5).